The chain runs to 495 residues: FK506-binding protein 4 (495 aa).

Disordered stretches follow at residues 115–198 (GSDD…ADLE), 243–312 (MDDD…NKRA), and 333–385 (KQQK…KPAT). Acidic residues-rich tracts occupy residues 116–126 (SDDEEDSDEEA), 152–161 (AQEESDEEME), 178–196 (ESDD…EGAD), and 243–283 (MDDD…LDGL). Basic and acidic residues predominate over residues 373–382 (EKPKQAKDSK). One can recognise a PPIase FKBP-type domain in the interval 409–495 (GDTVGVRYIG…IFDVKLLEIK (87 aa)).

This sequence belongs to the FKBP-type PPIase family. FKBP3/4 subfamily. Binds to histones H3 and H4.

The protein localises to the nucleus. The enzyme catalyses [protein]-peptidylproline (omega=180) = [protein]-peptidylproline (omega=0). Inhibited by both FK506 and rapamycin. Its function is as follows. PPIase that acts as a histone chaperone. Histone proline isomerase that increases the rate of cis-trans isomerization at prolines on the histone H3 N-terminal tail. Proline isomerization influences H3 methylation thereby regulating gene expression. This Gibberella zeae (strain ATCC MYA-4620 / CBS 123657 / FGSC 9075 / NRRL 31084 / PH-1) (Wheat head blight fungus) protein is FK506-binding protein 4 (FPR4).